A 367-amino-acid chain; its full sequence is DNA replication and repair protein RecF (367 aa).

31–38 (GENGSGKT) contributes to the ATP binding site.

Belongs to the RecF family.

The protein localises to the cytoplasm. In terms of biological role, the RecF protein is involved in DNA metabolism; it is required for DNA replication and normal SOS inducibility. RecF binds preferentially to single-stranded, linear DNA. It also seems to bind ATP. This chain is DNA replication and repair protein RecF, found in Saccharophagus degradans (strain 2-40 / ATCC 43961 / DSM 17024).